We begin with the raw amino-acid sequence, 1035 residues long: Retinoblastoma-related protein (1035 aa).

The disordered stretch occupies residues isoleucine 403 to serine 426. Residues threonine 431 to leucine 632 form a domain A region. Residues threonine 431–proline 885 are pocket. A spacer region spans residues threonine 633–glutamate 753. 2 disordered regions span residues proline 674–proline 697 and glycine 721–glycine 748. Positions threonine 754–proline 885 are domain B.

The protein belongs to the retinoblastoma protein (RB) family.

The protein resides in the nucleus. Its function is as follows. Regulator of biological processes that recruits a histone deacetylase to control gene transcription. May play a role in the entry into mitosis, negatively regulating the cell proliferation. Formation of stable complexes with geminiviridae replication-associated proteins may create a cellular environment which favors viral DNA replication. This Populus trichocarpa (Western balsam poplar) protein is Retinoblastoma-related protein (RBL901).